The primary structure comprises 488 residues: Microtubule-destabilizing protein 60 (488 aa).

Over residues Ala-25–Lys-56 the composition is skewed to polar residues. Disordered regions lie at residues Ala-25–Pro-71, His-262–Gln-304, and Asp-436–Asn-457. Over residues Ser-264 to Gly-280 the composition is skewed to low complexity.

The protein belongs to the TPX2 family.

The protein resides in the cytoplasm. It localises to the cytoskeleton. Binds directly to microtubules. Microtubule-destabilizing protein involved in the PIF3-dependent positive regulation of hypocotyl cell elongation via the modulation of cortical microtubules dynamic in response to light and ethylene signaling. Promotes submergence-induced and ethylene-dependent underwater hypocotyl elongation. This is Microtubule-destabilizing protein 60 from Arabidopsis thaliana (Mouse-ear cress).